The chain runs to 388 residues: Putative F-box/kelch-repeat protein At2g29820 (388 aa).

The interval 6 to 33 (EILDGPNGDDPNNNPQEGEDNQNENPQE) is disordered. Positions 9–21 (DGPNGDDPNNNPQ) are enriched in low complexity. Over residues 22–33 (EGEDNQNENPQE) the composition is skewed to acidic residues. The region spanning 38 to 84 (LRNLLELPEELIERLIAHIPRCYYPYISLVSRDFRQVITSDKLFRTR) is the F-box domain. 2 Kelch repeats span residues 140–187 (KMYV…EIGG) and 189–233 (IYVI…FSTY).

This is Putative F-box/kelch-repeat protein At2g29820 from Arabidopsis thaliana (Mouse-ear cress).